The chain runs to 272 residues: Ribosomal RNA small subunit methyltransferase A (272 aa).

Asn-18, Leu-20, Gly-45, Glu-66, Asp-91, and Asn-113 together coordinate S-adenosyl-L-methionine.

It belongs to the class I-like SAM-binding methyltransferase superfamily. rRNA adenine N(6)-methyltransferase family. RsmA subfamily.

The protein localises to the cytoplasm. The catalysed reaction is adenosine(1518)/adenosine(1519) in 16S rRNA + 4 S-adenosyl-L-methionine = N(6)-dimethyladenosine(1518)/N(6)-dimethyladenosine(1519) in 16S rRNA + 4 S-adenosyl-L-homocysteine + 4 H(+). Specifically dimethylates two adjacent adenosines (A1518 and A1519) in the loop of a conserved hairpin near the 3'-end of 16S rRNA in the 30S particle. May play a critical role in biogenesis of 30S subunits. The chain is Ribosomal RNA small subunit methyltransferase A from Proteus mirabilis (strain HI4320).